The sequence spans 82 residues: Small ribosomal subunit protein uS17 (82 aa).

The protein belongs to the universal ribosomal protein uS17 family. As to quaternary structure, part of the 30S ribosomal subunit.

One of the primary rRNA binding proteins, it binds specifically to the 5'-end of 16S ribosomal RNA. This is Small ribosomal subunit protein uS17 from Afipia carboxidovorans (strain ATCC 49405 / DSM 1227 / KCTC 32145 / OM5) (Oligotropha carboxidovorans).